Here is a 310-residue protein sequence, read N- to C-terminus: Serine/threonine-protein phosphatase 4 catalytic subunit (310 aa).

The Mn(2+) site is built by Asp53, His55, Asp81, and Asn113. His114 (proton donor) is an active-site residue. Mn(2+) contacts are provided by His163 and His237. Leu310 carries the post-translational modification Leucine methyl ester.

The protein belongs to the PPP phosphatase family. PP-4 (PP-X) subfamily. In terms of assembly, catalytic subunit of the histone H2A phosphatase complex (HTP-C) containing PPH3, PSY2 and PSY4. Requires Mn(2+) as cofactor.

Its subcellular location is the cytoplasm. The protein resides in the nucleus. It catalyses the reaction O-phospho-L-seryl-[protein] + H2O = L-seryl-[protein] + phosphate. It carries out the reaction O-phospho-L-threonyl-[protein] + H2O = L-threonyl-[protein] + phosphate. Involved in the dephosphorylation and activation of the transcription factor GLN3 in response to nutrient availability. Forms the histone H2A phosphatase complex in association with the regulatory subunits PSY2 and PSY4, which dephosphorylates H2AS128ph (gamma-H2A) that has been displaced from sites of DNA lesions in the double-stranded DNA break repair process. Dephosphorylation is necessary for efficient recovery from the DNA damage checkpoint. The chain is Serine/threonine-protein phosphatase 4 catalytic subunit (PPH3) from Eremothecium gossypii (strain ATCC 10895 / CBS 109.51 / FGSC 9923 / NRRL Y-1056) (Yeast).